An 87-amino-acid chain; its full sequence is UPF0250 protein BUAPTUC7_482 (87 aa).

It belongs to the UPF0250 family.

The protein is UPF0250 protein BUAPTUC7_482 of Buchnera aphidicola subsp. Acyrthosiphon pisum (strain Tuc7).